The sequence spans 177 residues: Macro domain-containing protein in non 5'region (177 aa).

The region spanning 1–177 is the Macro domain; sequence MSTSVSPVVR…VEFEEVLAMR (177 aa).

Belongs to the MacroD-type family.

The polypeptide is Macro domain-containing protein in non 5'region (Streptomyces griseus).